Consider the following 432-residue polypeptide: Lecithin-cholesterol acyltransferase-like 1 (432 aa).

The chain crosses the membrane as a helical span at residues 7 to 29 (HYSVVIAILVVVTMTSMCQAVGS). Serine 209 serves as the catalytic Acyl-ester intermediate. Residues aspartate 374 and histidine 400 each act as charge relay system in the active site.

It belongs to the AB hydrolase superfamily. Lipase family.

Its subcellular location is the membrane. This chain is Lecithin-cholesterol acyltransferase-like 1 (LCAT1), found in Arabidopsis thaliana (Mouse-ear cress).